A 155-amino-acid chain; its full sequence is Large ribosomal subunit protein uL22 (155 aa).

Belongs to the universal ribosomal protein uL22 family. Part of the 50S ribosomal subunit. Contacts the macrolide antibiotic tylosin in the polypeptide exit tunnel.

Its function is as follows. This protein binds specifically to 23S rRNA. It makes multiple contacts with different domains of the 23S rRNA in the assembled 50S subunit and ribosome. Functionally, contacts all 6 domains of the 23S rRNA, helping stabilize their relative orientation. An extended beta-hairpin in the C-terminus forms part of the polypeptide exit tunnel, in which it helps forms a bend with protein L4, while most of the rest of the protein is located at the polypeptide exit tunnel on the outside of the subunit. The protein is Large ribosomal subunit protein uL22 of Haloarcula marismortui (strain ATCC 43049 / DSM 3752 / JCM 8966 / VKM B-1809) (Halobacterium marismortui).